A 95-amino-acid polypeptide reads, in one-letter code: Ferredoxin-like protein FixX (95 aa).

It belongs to the bacterial-type ferredoxin family. FixX subfamily.

In terms of biological role, could be part of an electron transfer system required for anaerobic carnitine reduction. Could be a 3Fe-4S cluster-containing protein. This chain is Ferredoxin-like protein FixX (fixX), found in Shigella flexneri.